The sequence spans 434 residues: ATP-dependent protease ATPase subunit HslU (434 aa).

ATP contacts are provided by residues I18, 60–65 (GVGKTE), D247, E312, and R384.

This sequence belongs to the ClpX chaperone family. HslU subfamily. In terms of assembly, a double ring-shaped homohexamer of HslV is capped on each side by a ring-shaped HslU homohexamer. The assembly of the HslU/HslV complex is dependent on binding of ATP.

It localises to the cytoplasm. ATPase subunit of a proteasome-like degradation complex; this subunit has chaperone activity. The binding of ATP and its subsequent hydrolysis by HslU are essential for unfolding of protein substrates subsequently hydrolyzed by HslV. HslU recognizes the N-terminal part of its protein substrates and unfolds these before they are guided to HslV for hydrolysis. The polypeptide is ATP-dependent protease ATPase subunit HslU (Sinorhizobium fredii (strain NBRC 101917 / NGR234)).